We begin with the raw amino-acid sequence, 84 residues long: Cell division topological specificity factor (84 aa).

Belongs to the MinE family.

Prevents the cell division inhibition by proteins MinC and MinD at internal division sites while permitting inhibition at polar sites. This ensures cell division at the proper site by restricting the formation of a division septum at the midpoint of the long axis of the cell. In Ralstonia nicotianae (strain ATCC BAA-1114 / GMI1000) (Ralstonia solanacearum), this protein is Cell division topological specificity factor.